The sequence spans 465 residues: Cysteine--tRNA ligase (465 aa).

A Zn(2+)-binding site is contributed by cysteine 30. A 'HIGH' region motif is present at residues 32-42 (ITVYDYCHVGH). Zn(2+) is bound by residues cysteine 214, histidine 239, and glutamate 243. A 'KMSKS' region motif is present at residues 271 to 275 (KMSKS). ATP is bound at residue lysine 274.

Belongs to the class-I aminoacyl-tRNA synthetase family. In terms of assembly, monomer. It depends on Zn(2+) as a cofactor.

The protein localises to the cytoplasm. The enzyme catalyses tRNA(Cys) + L-cysteine + ATP = L-cysteinyl-tRNA(Cys) + AMP + diphosphate. The protein is Cysteine--tRNA ligase of Burkholderia ambifaria (strain MC40-6).